The primary structure comprises 526 residues: ATP synthase subunit alpha (526 aa).

Position 171 to 178 (171 to 178 (GDRQTGKT)) interacts with ATP.

The protein belongs to the ATPase alpha/beta chains family. F-type ATPases have 2 components, CF(1) - the catalytic core - and CF(0) - the membrane proton channel. CF(1) has five subunits: alpha(3), beta(3), gamma(1), delta(1), epsilon(1). CF(0) has four main subunits: a(1), b(1), b'(1) and c(9-12).

It localises to the cell inner membrane. The catalysed reaction is ATP + H2O + 4 H(+)(in) = ADP + phosphate + 5 H(+)(out). Produces ATP from ADP in the presence of a proton gradient across the membrane. The alpha chain is a regulatory subunit. In Chlorobium phaeobacteroides (strain DSM 266 / SMG 266 / 2430), this protein is ATP synthase subunit alpha.